We begin with the raw amino-acid sequence, 302 residues long: Oxygen-dependent coproporphyrinogen-III oxidase (302 aa).

Serine 94 provides a ligand contact to substrate. Residues histidine 98 and histidine 108 each contribute to the a divalent metal cation site. The active-site Proton donor is histidine 108. Residue 110–112 (NVR) participates in substrate binding. Positions 147 and 177 each coordinate a divalent metal cation. Residues 242 to 277 (YVEFNLVYDRGTLFGLQTGGRTESILMSMPPLVRWQ) form an important for dimerization region. 260–262 (GGR) contributes to the substrate binding site.

Belongs to the aerobic coproporphyrinogen-III oxidase family. As to quaternary structure, homodimer. A divalent metal cation serves as cofactor.

The protein resides in the cytoplasm. The catalysed reaction is coproporphyrinogen III + O2 + 2 H(+) = protoporphyrinogen IX + 2 CO2 + 2 H2O. It functions in the pathway porphyrin-containing compound metabolism; protoporphyrin-IX biosynthesis; protoporphyrinogen-IX from coproporphyrinogen-III (O2 route): step 1/1. Functionally, involved in the heme biosynthesis. Catalyzes the aerobic oxidative decarboxylation of propionate groups of rings A and B of coproporphyrinogen-III to yield the vinyl groups in protoporphyrinogen-IX. This chain is Oxygen-dependent coproporphyrinogen-III oxidase, found in Shewanella baltica (strain OS155 / ATCC BAA-1091).